The sequence spans 345 residues: Ferrochelatase (345 aa).

Positions 215 and 296 each coordinate Fe cation.

This sequence belongs to the ferrochelatase family.

The protein localises to the cytoplasm. The catalysed reaction is heme b + 2 H(+) = protoporphyrin IX + Fe(2+). It participates in porphyrin-containing compound metabolism; protoheme biosynthesis; protoheme from protoporphyrin-IX: step 1/1. Catalyzes the ferrous insertion into protoporphyrin IX. The sequence is that of Ferrochelatase from Rhodopseudomonas palustris (strain TIE-1).